Consider the following 124-residue polypeptide: Small ribosomal subunit protein uS12 (124 aa).

Asp-89 carries the post-translational modification 3-methylthioaspartic acid.

The protein belongs to the universal ribosomal protein uS12 family. In terms of assembly, part of the 30S ribosomal subunit. Contacts proteins S8 and S17. May interact with IF1 in the 30S initiation complex.

Functionally, with S4 and S5 plays an important role in translational accuracy. Its function is as follows. Interacts with and stabilizes bases of the 16S rRNA that are involved in tRNA selection in the A site and with the mRNA backbone. Located at the interface of the 30S and 50S subunits, it traverses the body of the 30S subunit contacting proteins on the other side and probably holding the rRNA structure together. The combined cluster of proteins S8, S12 and S17 appears to hold together the shoulder and platform of the 30S subunit. This Proteus mirabilis (strain HI4320) protein is Small ribosomal subunit protein uS12.